We begin with the raw amino-acid sequence, 440 residues long: MSFELHSLWQERHDDEHKIRRDDHRSPYQRDRARILHSAAFRRLQAKTQVHGNSLEDFHRSRLTHSLEAAQLGTGIVAQLKKKQSEFKELLPSDSLIDSLCLAHDIGHPPYGHGGEVALNYMMRDHGGFEGNAQTFRIVTKLEPYTEHFGMNLSRRTLLGLIKYPALISQTRSVKLPNPAEHQRRLKAKEWSPAKGIYDCDKDLFDWVIAPLSENDKSLLSQMRYRPDSDLEHSKTRFKSLDCSIMELADDIAYGVHDLEDAIVLGMVTRQQWQEGAASQLADCGDPWFEEHIGSIGQMLFSGKHHQRKDAIGGMVNALLTSISIKVVDEPFQNPLLAWNACLEPHMAKALDVLKHFVSQYVIQVPQVQIVEYKGQQIIMDIFEALSADPERLLPIHTKELWQSATSDSGKMRVIADYISAMTDGHAQKLHRQLFSSIVL.

Residues 62–255 (RLTHSLEAAQ…MELADDIAYG (194 aa)) form the HD domain.

Belongs to the dGTPase family. Type 2 subfamily.

The protein is Deoxyguanosinetriphosphate triphosphohydrolase-like protein of Vibrio parahaemolyticus serotype O3:K6 (strain RIMD 2210633).